A 473-amino-acid polypeptide reads, in one-letter code: Photosystem II CP43 reaction center protein (473 aa).

Residues 1 to 14 (MKTLYSLRRYYPVE) constitute a propeptide that is removed on maturation. Position 15 is an N-acetylthreonine (Thr-15). Position 15 is a phosphothreonine (Thr-15). 5 consecutive transmembrane segments (helical) span residues 69-93 (LFEV…PHLA), 134-155 (LIGP…KDKN), 178-200 (KASF…REIT), 255-275 (KPFA…LSYS), and 291-312 (WFNN…ASQA). Glu-367 is a binding site for [CaMn4O5] cluster. Residues 447–471 (RARAAAAGFEKGIDRDSEPVLSMTP) form a helical membrane-spanning segment.

Belongs to the PsbB/PsbC family. PsbC subfamily. In terms of assembly, PSII is composed of 1 copy each of membrane proteins PsbA, PsbB, PsbC, PsbD, PsbE, PsbF, PsbH, PsbI, PsbJ, PsbK, PsbL, PsbM, PsbT, PsbX, PsbY, PsbZ, Psb30/Ycf12, at least 3 peripheral proteins of the oxygen-evolving complex and a large number of cofactors. It forms dimeric complexes. The cofactor is Binds multiple chlorophylls and provides some of the ligands for the Ca-4Mn-5O cluster of the oxygen-evolving complex. It may also provide a ligand for a Cl- that is required for oxygen evolution. PSII binds additional chlorophylls, carotenoids and specific lipids..

It is found in the plastid. The protein localises to the chloroplast thylakoid membrane. In terms of biological role, one of the components of the core complex of photosystem II (PSII). It binds chlorophyll and helps catalyze the primary light-induced photochemical processes of PSII. PSII is a light-driven water:plastoquinone oxidoreductase, using light energy to abstract electrons from H(2)O, generating O(2) and a proton gradient subsequently used for ATP formation. The sequence is that of Photosystem II CP43 reaction center protein from Anthoceros angustus (Hornwort).